We begin with the raw amino-acid sequence, 25 residues long: Antifungal protein 1 (25 aa).

The tract at residues 1 to 25 (QSERFEQQMQGQDFSHDERFLSQAA) is disordered. Over residues 14–25 (FSHDERFLSQAA) the composition is skewed to basic and acidic residues.

Belongs to the 2S seed storage albumins family. As to expression, expressed in seed (at protein level). Not detected in pulp, stems and leaves.

Functionally, has strong antifungal activity against T.harzianum, F.oxysporum and A.fumigatus with IC(50) values of 32 ug/ml, 34 ug/ml and 40 ug/ml, restectively. Lacks antifungal activity against R.solani, P.brasiliensis and C.albicans. This Passiflora edulis (Passion fruit) protein is Antifungal protein 1.